A 94-amino-acid polypeptide reads, in one-letter code: Phosphoribosyl-ATP pyrophosphatase (94 aa).

This sequence belongs to the PRA-PH family.

The protein localises to the cytoplasm. The catalysed reaction is 1-(5-phospho-beta-D-ribosyl)-ATP + H2O = 1-(5-phospho-beta-D-ribosyl)-5'-AMP + diphosphate + H(+). It participates in amino-acid biosynthesis; L-histidine biosynthesis; L-histidine from 5-phospho-alpha-D-ribose 1-diphosphate: step 2/9. This chain is Phosphoribosyl-ATP pyrophosphatase, found in Pyrobaculum neutrophilum (strain DSM 2338 / JCM 9278 / NBRC 100436 / V24Sta) (Thermoproteus neutrophilus).